The primary structure comprises 570 residues: D-xylulose kinase A (570 aa).

Residues His95, Arg166, Asp282, and Asn283 each contribute to the substrate site. Residues Trp364, 469–470 (GG), and Asn473 contribute to the ATP site.

It belongs to the FGGY kinase family.

The protein resides in the cytoplasm. The catalysed reaction is D-xylulose + ATP = D-xylulose 5-phosphate + ADP + H(+). Functionally, highly specific D-xylulose kinase which participates in the catabolism of xylose. Xylose is a major component of hemicelluloses such as xylan. Most fungi utilize D-xylose via three enzymatic reactions, xylose reductase (XR), xylitol dehydrogenase (XDH), and xylulokinase, to form xylulose 5-phosphate, which enters pentose phosphate pathway. The protein is D-xylulose kinase A (xkiA) of Aspergillus niger.